The primary structure comprises 166 residues: uncharacterized protein (166 aa).

The may interact with smn1 stretch occupies residues 1–58 (MSSEITEGDLQKFHDEHFNAKAVNLWNVAFAQNDRGGNSESANVEYTQSVERYPDGTI).

Part of the core SMN complex at least composed of smn1, yip11/gem2, gem6, gem7 and gem8. Interacts with smn1; the interaction is direct. Interacts with gem7; the interaction is direct.

The protein resides in the cytoplasm. It is found in the nucleus. Functionally, the SMN complex catalyzes the assembly of small nuclear ribonucleoproteins (snRNPs), the building blocks of the spliceosome, and thereby plays an important role in the splicing of cellular pre-mRNAs. Most spliceosomal snRNPs contain a common set of Sm proteins SNRPB, SNRPD1, SNRPD2, SNRPD3, SNRPE, SNRPF and SNRPG that assemble in a heptameric protein ring on the Sm site of the small nuclear RNA to form the core snRNP (Sm core). In the cytosol, the Sm proteins SNRPD1, SNRPD2, SNRPE, SNRPF and SNRPG are trapped in an inactive 6S pICln-Sm complex by the chaperone CLNS1A that controls the assembly of the core snRNP. To assemble core snRNPs, the SMN complex accepts the trapped 5Sm proteins from CLNS1A forming an intermediate. Binding of snRNA inside 5Sm triggers eviction of the SMN complex, thereby allowing binding of SNRPD3 and SNRPB to complete assembly of the core snRNP. This is an uncharacterized protein from Schizosaccharomyces pombe (strain 972 / ATCC 24843) (Fission yeast).